The following is a 971-amino-acid chain: Translation initiation factor IF-2 (971 aa).

Over residues 49–63 the composition is skewed to basic and acidic residues; the sequence is HLRKSHGATDGDKRK. 2 disordered regions span residues 49 to 86 and 101 to 385; these read HLRK…ARTI and DVAE…APTE. Residues 105-114 are compositionally biased toward low complexity; the sequence is GAEQGQAQVA. Residues 121-177 are compositionally biased toward basic and acidic residues; the sequence is ELKRREEEARREAELLEKQAQELRERQERLEREEAERRAREEAAEAQRRRAEEEAAA. Residues 178–209 show a composition bias toward low complexity; that stretch reads KRAAAAAVEAQQVAAQQAAEAQQETAGAQSAQ. The span at 210–261 shows a compositional bias: basic and acidic residues; sequence DEARAAAERAAQREAAKKAEDAAREAADKTRAEQEEIRKRREAAEAEARAIR. Pro residues predominate over residues 277–286; it reads PPKPVEPPKP. The span at 298-325 shows a compositional bias: low complexity; that stretch reads KPAGASAARPAVKKPAGAAPATTAPAGA. Positions 355–368 are enriched in gly residues; that stretch reads SSGGVDRGWRGGPK. The 170-residue stretch at 471-640 folds into the tr-type G domain; that stretch reads PRPPVVTVMG…LLQAEVLELK (170 aa). Positions 480-487 are G1; sequence GHVDHGKT. GTP is bound at residue 480 to 487; sequence GHVDHGKT. The segment at 505–509 is G2; that stretch reads GITQH. The tract at residues 526–529 is G3; that stretch reads DTPG. Residues 526 to 530 and 580 to 583 contribute to the GTP site; these read DTPGH and NKID. Residues 580–583 form a G4 region; sequence NKID. The interval 616-618 is G5; sequence SAK.

Belongs to the TRAFAC class translation factor GTPase superfamily. Classic translation factor GTPase family. IF-2 subfamily.

Its subcellular location is the cytoplasm. One of the essential components for the initiation of protein synthesis. Protects formylmethionyl-tRNA from spontaneous hydrolysis and promotes its binding to the 30S ribosomal subunits. Also involved in the hydrolysis of GTP during the formation of the 70S ribosomal complex. The polypeptide is Translation initiation factor IF-2 (Burkholderia ambifaria (strain ATCC BAA-244 / DSM 16087 / CCUG 44356 / LMG 19182 / AMMD) (Burkholderia cepacia (strain AMMD))).